A 698-amino-acid chain; its full sequence is Elongation factor G 1 (698 aa).

Positions 8–290 constitute a tr-type G domain; it reads ERYRNIGIVA…AVVDYLPAPI (283 aa). Residues 17–24, 88–92, and 142–145 contribute to the GTP site; these read AHVDAGKT, DTPGH, and NKMD.

Belongs to the TRAFAC class translation factor GTPase superfamily. Classic translation factor GTPase family. EF-G/EF-2 subfamily.

It localises to the cytoplasm. Catalyzes the GTP-dependent ribosomal translocation step during translation elongation. During this step, the ribosome changes from the pre-translocational (PRE) to the post-translocational (POST) state as the newly formed A-site-bound peptidyl-tRNA and P-site-bound deacylated tRNA move to the P and E sites, respectively. Catalyzes the coordinated movement of the two tRNA molecules, the mRNA and conformational changes in the ribosome. The chain is Elongation factor G 1 from Shewanella denitrificans (strain OS217 / ATCC BAA-1090 / DSM 15013).